A 413-amino-acid polypeptide reads, in one-letter code: Histidine--tRNA ligase (413 aa).

This sequence belongs to the class-II aminoacyl-tRNA synthetase family. In terms of assembly, homodimer.

Its subcellular location is the cytoplasm. It carries out the reaction tRNA(His) + L-histidine + ATP = L-histidyl-tRNA(His) + AMP + diphosphate + H(+). This is Histidine--tRNA ligase (hisS) from Rickettsia prowazekii (strain Madrid E).